A 361-amino-acid chain; its full sequence is Mitogen-activated protein kinase 14 (361 aa).

The Protein kinase domain occupies 32-316 (YVPIKPIGRG…VSDALLHPYM (285 aa)). ATP is bound by residues 38–46 (IGRGAYGVV) and lysine 61. The active-site Proton acceptor is aspartate 158. Position 188 is a phosphothreonine (threonine 188). A TXY motif is present at residues 188–190 (TEY). Tyrosine 190 is modified (phosphotyrosine). Threonine 193 is subject to Phosphothreonine.

The protein belongs to the protein kinase superfamily. CMGC Ser/Thr protein kinase family. MAP kinase subfamily. In terms of assembly, interacts with MKK3. In terms of processing, dually phosphorylated on Thr-188 and Tyr-190, which activates the enzyme.

The enzyme catalyses L-seryl-[protein] + ATP = O-phospho-L-seryl-[protein] + ADP + H(+). The catalysed reaction is L-threonyl-[protein] + ATP = O-phospho-L-threonyl-[protein] + ADP + H(+). With respect to regulation, activated by threonine and tyrosine phosphorylation. The chain is Mitogen-activated protein kinase 14 (MPK14) from Arabidopsis thaliana (Mouse-ear cress).